The chain runs to 295 residues: Beta-chimaerin (295 aa).

The Phorbol-ester/DAG-type zinc finger occupies 41–91; the sequence is THNFKVHTFRGPHWCEYCANFMWGLIAQGVRCSDCGLNVHKQCSKHVPNDC. Residues 104–295 form the Rho-GAP domain; it reads CDLTTLVKAH…ILIENEDVLF (192 aa).

As to expression, found in cerebellum and testis.

The protein localises to the membrane. In the inactive state, the N terminus protrudes into the active site of the Rho-GAP domain, sterically blocking Rac binding. Phospholipid binding to the Phorbol-ester/DAG-type zinc-finger/C1 domain triggers the cooperative dissociation of these interactions, allowing the N-terminus to move out of the active site and thereby activating the enzyme. Functionally, GTPase-activating protein for p21-rac. This chain is Beta-chimaerin (Chn2), found in Rattus norvegicus (Rat).